The chain runs to 175 residues: Ferritin light chain (175 aa).

Ser-2 is modified (N-acetylserine). The Ferritin-like diiron domain occupies 7-156; it reads QNYSTEVEAA…DHLTNLRRLA (150 aa). The Fe cation site is built by Glu-54, Glu-58, Glu-61, and Glu-64.

Belongs to the ferritin family. As to quaternary structure, oligomer of 24 subunits. There are two types of subunits: L (light) chain and H (heavy) chain. The major chain can be light or heavy, depending on the species and tissue type. The functional molecule forms a roughly spherical shell with a diameter of 12 nm and contains a central cavity into which the insoluble mineral iron core is deposited. Interacts with NCOA4.

Its subcellular location is the cytoplasmic vesicle. It localises to the autophagosome. It is found in the cytoplasm. The protein localises to the autolysosome. Functionally, stores iron in a soluble, non-toxic, readily available form. Important for iron homeostasis. Iron is taken up in the ferrous form and deposited as ferric hydroxides after oxidation. Also plays a role in delivery of iron to cells. Mediates iron uptake in capsule cells of the developing kidney. Delivery to lysosomes by the cargo receptor NCOA4 for autophagic degradation and release or iron. The polypeptide is Ferritin light chain (FTL) (Bos taurus (Bovine)).